The following is a 40-amino-acid chain: Dolichyl-diphosphooligosaccharide--protein glycosyltransferase subunit 4 (40 aa).

Topologically, residues 1 to 4 (MITD) are lumenal. Residues 5-25 (VQLAIFSNVLGVFLFLLVVAY) traverse the membrane as a helical segment. Topologically, residues 26–40 (HYINANTGKPSAKAK) are cytoplasmic.

Belongs to the OST4 family. In terms of assembly, component of the oligosaccharyltransferase (OST) complex.

Its subcellular location is the endoplasmic reticulum membrane. Its function is as follows. Subunit of the oligosaccharyl transferase (OST) complex that catalyzes the initial transfer of a defined glycan (Glc(3)Man(9)GlcNAc(2) in eukaryotes) from the lipid carrier dolichol-pyrophosphate to an asparagine residue within an Asn-X-Ser/Thr consensus motif in nascent polypeptide chains, the first step in protein N-glycosylation. N-glycosylation occurs cotranslationally and the complex associates with the Sec61 complex at the channel-forming translocon complex that mediates protein translocation across the endoplasmic reticulum (ER). All subunits are required for a maximal enzyme activity. This is Dolichyl-diphosphooligosaccharide--protein glycosyltransferase subunit 4 from Drosophila erecta (Fruit fly).